A 425-amino-acid polypeptide reads, in one-letter code: Serine--tRNA ligase (425 aa).

230–232 (TAE) serves as a coordination point for L-serine. 261-263 (RSE) serves as a coordination point for ATP. E284 serves as a coordination point for L-serine. 348-351 (EISS) is a binding site for ATP. An L-serine-binding site is contributed by S384.

The protein belongs to the class-II aminoacyl-tRNA synthetase family. Type-1 seryl-tRNA synthetase subfamily. In terms of assembly, homodimer. The tRNA molecule binds across the dimer.

The protein resides in the cytoplasm. The catalysed reaction is tRNA(Ser) + L-serine + ATP = L-seryl-tRNA(Ser) + AMP + diphosphate + H(+). It carries out the reaction tRNA(Sec) + L-serine + ATP = L-seryl-tRNA(Sec) + AMP + diphosphate + H(+). The protein operates within aminoacyl-tRNA biosynthesis; selenocysteinyl-tRNA(Sec) biosynthesis; L-seryl-tRNA(Sec) from L-serine and tRNA(Sec): step 1/1. In terms of biological role, catalyzes the attachment of serine to tRNA(Ser). Is also able to aminoacylate tRNA(Sec) with serine, to form the misacylated tRNA L-seryl-tRNA(Sec), which will be further converted into selenocysteinyl-tRNA(Sec). This Maridesulfovibrio salexigens (strain ATCC 14822 / DSM 2638 / NCIMB 8403 / VKM B-1763) (Desulfovibrio salexigens) protein is Serine--tRNA ligase.